A 512-amino-acid polypeptide reads, in one-letter code: ATP synthase subunit alpha (512 aa).

Gly-169–Thr-176 contributes to the ATP binding site.

Belongs to the ATPase alpha/beta chains family. As to quaternary structure, F-type ATPases have 2 components, CF(1) - the catalytic core - and CF(0) - the membrane proton channel. CF(1) has five subunits: alpha(3), beta(3), gamma(1), delta(1), epsilon(1). CF(0) has three main subunits: a(1), b(2) and c(9-12). The alpha and beta chains form an alternating ring which encloses part of the gamma chain. CF(1) is attached to CF(0) by a central stalk formed by the gamma and epsilon chains, while a peripheral stalk is formed by the delta and b chains.

The protein localises to the cell inner membrane. It carries out the reaction ATP + H2O + 4 H(+)(in) = ADP + phosphate + 5 H(+)(out). Produces ATP from ADP in the presence of a proton gradient across the membrane. The alpha chain is a regulatory subunit. The chain is ATP synthase subunit alpha from Orientia tsutsugamushi (strain Boryong) (Rickettsia tsutsugamushi).